Consider the following 530-residue polypeptide: 2,3-bisphosphoglycerate-independent phosphoglycerate mutase (530 aa).

Residues aspartate 15 and serine 65 each coordinate Mn(2+). Serine 65 functions as the Phosphoserine intermediate in the catalytic mechanism. Residues histidine 126, 155–156, arginine 187, arginine 193, 257–260, and lysine 330 each bind substrate; these read RD and RPDR. Residues aspartate 397, histidine 401, aspartate 438, histidine 439, and histidine 456 each contribute to the Mn(2+) site.

The protein belongs to the BPG-independent phosphoglycerate mutase family. As to quaternary structure, monomer. It depends on Mn(2+) as a cofactor.

It carries out the reaction (2R)-2-phosphoglycerate = (2R)-3-phosphoglycerate. Its pathway is carbohydrate degradation; glycolysis; pyruvate from D-glyceraldehyde 3-phosphate: step 3/5. Catalyzes the interconversion of 2-phosphoglycerate and 3-phosphoglycerate. The sequence is that of 2,3-bisphosphoglycerate-independent phosphoglycerate mutase from Synechococcus sp. (strain JA-2-3B'a(2-13)) (Cyanobacteria bacterium Yellowstone B-Prime).